The primary structure comprises 488 residues: 3-octaprenyl-4-hydroxybenzoate carboxy-lyase (488 aa).

A Mn(2+)-binding site is contributed by Asn-172. Prenylated FMN contacts are provided by residues Ile-175–Arg-177, Arg-189–Leu-191, and Arg-194–Gly-195. Glu-238 contributes to the Mn(2+) binding site. Asp-287 acts as the Proton donor in catalysis.

The protein belongs to the UbiD family. In terms of assembly, homohexamer. The cofactor is prenylated FMN. It depends on Mn(2+) as a cofactor.

Its subcellular location is the cell membrane. It catalyses the reaction a 4-hydroxy-3-(all-trans-polyprenyl)benzoate + H(+) = a 2-(all-trans-polyprenyl)phenol + CO2. The protein operates within cofactor biosynthesis; ubiquinone biosynthesis. Catalyzes the decarboxylation of 3-octaprenyl-4-hydroxy benzoate to 2-octaprenylphenol, an intermediate step in ubiquinone biosynthesis. The protein is 3-octaprenyl-4-hydroxybenzoate carboxy-lyase of Legionella pneumophila (strain Corby).